Here is a 408-residue protein sequence, read N- to C-terminus: Peptidase T (408 aa).

His-78 is a binding site for Zn(2+). Residue Asp-80 is part of the active site. Position 140 (Asp-140) interacts with Zn(2+). Glu-173 functions as the Proton acceptor in the catalytic mechanism. Residues Glu-174, Asp-196, and His-379 each contribute to the Zn(2+) site.

The protein belongs to the peptidase M20B family. Zn(2+) serves as cofactor.

The protein localises to the cytoplasm. The enzyme catalyses Release of the N-terminal residue from a tripeptide.. In terms of biological role, cleaves the N-terminal amino acid of tripeptides. The polypeptide is Peptidase T (Shigella boydii serotype 18 (strain CDC 3083-94 / BS512)).